The sequence spans 2327 residues: MTSTHVATLGVGAQAPPRHQKKSAGTAFVSSGSSRPSYRKNGQRTRSLREESNGGVSDSKKLNHSIRQGLAGIIDLPNDAASEVDISHGSEDPRGPTVPGSYQMNGIINETHNGRHASVSKVVEFCTALGGKTPIHSVLVANNGMAAAKFMRSVRTWANDTFGSEKAIQLIAMATPEDLRINAEHIRIADQFVEVPGGTNNNNYANVQLIVEIAERTGVSAVWPGWGHASENPELPDALTAKGIVFLGPPASSMHALGDKVGSALIAQAAGVPTLAWSGSHVEVPLECCLDSIPDEMYRKACVTTTEEAVASCQVVGYPAMIKASWGGGGKGIRKVHNDDEVRTLFKQVQGEVPGSPIFIMRLAAQSRHLEVQLLCDQYGNVAALHSRDCSVQRRHQKIIEEGPVTVAPRETVKELEQAARRLAKAVGYVGAATVEYLYSMETGEYYFLELNPRLQVEHPVTEWIAEVNLPAAQVAVGMGIPLWQIPEIRRFYGMNHGGGYDLWRKTAALATPFNFDEVDSKWPKGHCVAVRITSEDPDDGFKPTGGKVKEISFKSKPNVWAYFSVKSGGGIHEFADSQFGHVFAYGTTRSAAITTMALALKEVQIRGEIHSNVDYTVDLLNASDFRENKIHTGWLDTRIAMRVQAERPPWYISVVGGALYKTVTANTATVSDYVGYLTKGQIPPKHISLVYTTVALNIDGKKYTIDTVRSGHGSYRLRMNGSTVDANVQILCDGGLLMQLDGNSHVIYAEEEASGTRLLIDGKTCMLQNDHDPSKLLAETPCKLLRFLVADGAHVDADVPYAEVEVMKMCMPLLSPASGVIHVVMSEGQAMQAGDLIARLDLDDPSAVKRAEPFEDTFPQMGLPIAASGQVHKLCAASLNACRMILAGYEHDIDKVVPELVYCLDTPELPFLQWEELMSVLATRLPRNLKSELEGKYEEYKVKFDSGIINDFPANMLRVIIEENLACGSEKEKATNERLVEPLMSLLKSYEGGRESHAHFVVKSLFEEYLYVEELFSDGIQSDVIERLRLQHSKDLQKVVDIVLSHQSVRNKTKLILKLMESLVYPNPAAYRDQLIRFSSLNHKAYYKLALKASELLEQTKLSELRARIARSLSELEMFTEESKGLSMHKREIAIKESMEDLVTAPLPVEDALISLFDCSDTTVQQRVIETYIARLYQPHLVKDSIKMKWIESGVIALWEFPEGHFDARNGGAVLGDKRWGAMVIVKSLESLSMAIRFALKETSHYTSSEGNMMHIALLGADNKMHIIQESGDDADRIAKLPLILKDNVTDLHASGVKTISFIVQRDEARMTMRRTFLWSDEKLSYEEEPILRHVEPPLSALLELDKLKVKGYNEMKYTPSRDRQWHIYTLRNTENPKMLHRVFFRTLVRQPSVSNKFSSGQIGDMEVGSAEEPLSFTSTSILRSLMTAIEELELHAIRTGHSHMYLHVLKEQKLLDLVPVSGNTVLDVGQDEATAYSLLKEMAMKIHELVGARMHHLSVCQWEVKLKLDCDGPASGTWRIVTTNVTSHTCTVDIYREMEDKESRKLVYHPATPAAGPLHGVALNNPYQPLSVIDLKRCSARNNRTTYCYDFPLAFETAVRKSWSSSTSGASKGVENAQCYVKATELVFADKHGSWGTPLVQMDRPAGLNDIGMVAWTLKMSTPEFPSGREIIVVANDITFRAGSFGPREDAFFEAVTNLACEKKLPLIYLAANSGARIGIADEVKSCFRVGWSDDGSPERGFQYIYLSEEDYARIGTSVIAHKMQLDSGEIRWVIDSVVGKEDGLGVENIHGSAAIASAYSRAYKETFTLTFVTGRTVGIGAYLARLGIRCIQRLDQPIILTGYSALNKLLGREVYSSHMQLGGPKIMATNGVVHLTVSDDLEGVSNILRWLSYVPAYIGGPLPVTTPLDPPDRPVAYIPENSCDPRAAIRGVDDSQGKWLGGMFDKDSFVETFEGWAKTVVTGRAKLGGIPVGVIAVETQTMMQTIPADPGQLDSREQSVPRAGQVWFPDSATKTAQALLDFNREGLPLFILANWRGFSGGQRDLFEGILQAGSTIVENLRTYNQPAFVYIPMAAELRGGAWVVVDSKINPDRIECYAERTAKGNVLEPQGLIEIKFRSEELQDCMSRLDPTLIDLKAKLEVANKNGSADTKSLQENIEARTKQLMPLYTQIAIRFAELHDTSLRMAAKGVIKKVVDWEESRSFFYKRLRRRISEDVLAKEIRAVAGEQFSHQPAIELIKKWYSASHAAEWDDDDAFVAWMDNPENYKDYIQYLKAQRVSQSLSSLSDSSSDLQALPQGLSMLLDKMDPSRRAQLVEEIRKVLG.

A disordered region spans residues 1–62 (MTSTHVATLG…NGGVSDSKKL (62 aa)). Residues 134–641 (PIHSVLVANN…HTGWLDTRIA (508 aa)) form the Biotin carboxylation domain. Residues 287-481 (ECCLDSIPDE…AAQVAVGMGI (195 aa)) enclose the ATP-grasp domain. Position 313–370 (313–370 (CQVVGYPAMIKASWGGGGKGIRKVHNDDEVRTLFKQVQGEVPGSPIFIMRLAAQSRHL)) interacts with ATP. Mg(2+) is bound by residues Glu436, Glu450, and Asn452. Mn(2+) contacts are provided by Glu436, Glu450, and Asn452. Arg454 is a catalytic residue. Residues 768–842 (LQNDHDPSKL…QAGDLIARLD (75 aa)) form the Biotinyl-binding domain. An N6-biotinyllysine modification is found at Lys809. The 342-residue stretch at 1568–1909 (PYQPLSVIDL…YIGGPLPVTT (342 aa)) folds into the CoA carboxyltransferase N-terminal domain. Residues 1568 to 2227 (PYQPLSVIDL…EDVLAKEIRA (660 aa)) are carboxyltransferase. CoA is bound by residues Arg1818, Lys2119, and Arg2121. Residues 1913–2227 (PPDRPVAYIP…EDVLAKEIRA (315 aa)) form the CoA carboxyltransferase C-terminal domain.

In terms of assembly, homodimer. Biotin serves as cofactor. Requires Mg(2+) as cofactor. Mn(2+) is required as a cofactor.

The protein resides in the cytoplasm. It localises to the cytosol. The enzyme catalyses hydrogencarbonate + acetyl-CoA + ATP = malonyl-CoA + ADP + phosphate + H(+). It catalyses the reaction N(6)-biotinyl-L-lysyl-[protein] + hydrogencarbonate + ATP = N(6)-carboxybiotinyl-L-lysyl-[protein] + ADP + phosphate + H(+). Its pathway is lipid metabolism; malonyl-CoA biosynthesis; malonyl-CoA from acetyl-CoA: step 1/1. Multifunctional enzyme that catalyzes the carboxylation of acetyl-CoA, forming malonyl-CoA, which is used in the plastid for fatty acid synthesis and in the cytosol in various biosynthetic pathways including fatty acid elongation. The polypeptide is Acetyl-CoA carboxylase 2 (ACC2) (Oryza sativa subsp. japonica (Rice)).